Here is a 416-residue protein sequence, read N- to C-terminus: Tyrosine--tRNA ligase (416 aa).

Tyr37 serves as a coordination point for L-tyrosine. The short motif at 42–51 (PTADSLHVGN) is the 'HIGH' region element. Positions 176 and 180 each coordinate L-tyrosine. The 'KMSKS' region motif lies at 236–240 (KMGKS). Residue Lys239 participates in ATP binding. Residues 350-416 (LPAFRVFQEA…KKKHILLRPV (67 aa)) enclose the S4 RNA-binding domain.

Belongs to the class-I aminoacyl-tRNA synthetase family. TyrS type 1 subfamily. As to quaternary structure, homodimer.

The protein localises to the cytoplasm. The enzyme catalyses tRNA(Tyr) + L-tyrosine + ATP = L-tyrosyl-tRNA(Tyr) + AMP + diphosphate + H(+). In terms of biological role, catalyzes the attachment of tyrosine to tRNA(Tyr) in a two-step reaction: tyrosine is first activated by ATP to form Tyr-AMP and then transferred to the acceptor end of tRNA(Tyr). The sequence is that of Tyrosine--tRNA ligase from Gluconobacter oxydans (strain 621H) (Gluconobacter suboxydans).